Consider the following 660-residue polypeptide: DNA mismatch repair protein MutL (660 aa).

Polar residues predominate over residues 341–355 (SFQSDGAPPTQQLSS). 2 disordered regions span residues 341–362 (SFQS…EKAE) and 378–398 (ALSP…RVER). Positions 385-398 (ELPKSPERSERVER) are enriched in basic and acidic residues.

Belongs to the DNA mismatch repair MutL/HexB family.

Its function is as follows. This protein is involved in the repair of mismatches in DNA. It is required for dam-dependent methyl-directed DNA mismatch repair. May act as a 'molecular matchmaker', a protein that promotes the formation of a stable complex between two or more DNA-binding proteins in an ATP-dependent manner without itself being part of a final effector complex. This Heliobacterium modesticaldum (strain ATCC 51547 / Ice1) protein is DNA mismatch repair protein MutL.